The primary structure comprises 132 residues: Insulin-like 3 (132 aa).

An N-terminal signal peptide occupies residues 1-24 (MSPRPLAWALVLLGAALAVALALG). Cystine bridges form between Cys-36–Cys-117, Cys-48–Cys-130, and Cys-116–Cys-121. Residues 61-104 (VAGGDRELLQWLEGRHLHGQVSDGDPMLVLVPQALPQASLHHHH) constitute a propeptide, c peptide like.

It belongs to the insulin family. As to quaternary structure, heterodimer of a B chain and an A chain linked by two disulfide bonds. More strongly expressed in testis than in ovary.

It is found in the secreted. Seems to play a role in testicular function. May be a trophic hormone with a role in testicular descent in fetal life. Is a ligand for LGR8 receptor. This is Insulin-like 3 (INSL3) from Canis lupus familiaris (Dog).